A 964-amino-acid polypeptide reads, in one-letter code: Integrator complex subunit 7 (964 aa).

Residues 937–958 are compositionally biased toward low complexity; that stretch reads QQLRHQLQQQQQNVPQPAAQRN. The interval 937 to 964 is disordered; the sequence is QQLRHQLQQQQQNVPQPAAQRNISTRFQ.

The protein belongs to the Integrator subunit 7 family. Component of the Integrator complex, composed of core subunits INTS1, INTS2, INTS3, INTS4, INTS5, INTS6, INTS7, INTS8, INTS9/RC74, INTS10, INTS11/CPSF3L, INTS12, INTS13, INTS14 and INTS15. The core complex associates with protein phosphatase 2A subunits PPP2CA and PPP2R1A, to form the Integrator-PP2A (INTAC) complex.

It localises to the nucleus. It is found in the chromosome. The protein localises to the cytoplasm. Component of the integrator complex, a multiprotein complex that terminates RNA polymerase II (Pol II) transcription in the promoter-proximal region of genes. The integrator complex provides a quality checkpoint during transcription elongation by driving premature transcription termination of transcripts that are unfavorably configured for transcriptional elongation: the complex terminates transcription by (1) catalyzing dephosphorylation of the C-terminal domain (CTD) of Pol II subunit POLR2A/RPB1 and SUPT5H/SPT5, (2) degrading the exiting nascent RNA transcript via endonuclease activity and (3) promoting the release of Pol II from bound DNA. The integrator complex is also involved in terminating the synthesis of non-coding Pol II transcripts, such as enhancer RNAs (eRNAs), small nuclear RNAs (snRNAs), telomerase RNAs and long non-coding RNAs (lncRNAs). Essential during embryogenesis for eye development. This chain is Integrator complex subunit 7 (ints7), found in Danio rerio (Zebrafish).